Here is a 249-residue protein sequence, read N- to C-terminus: DNA polymerase sliding clamp (249 aa).

It belongs to the PCNA family. As to quaternary structure, homotrimer. The subunits circularize to form a toroid; DNA passes through its center. Replication factor C (RFC) is required to load the toroid on the DNA.

Its function is as follows. Sliding clamp subunit that acts as a moving platform for DNA processing. Responsible for tethering the catalytic subunit of DNA polymerase and other proteins to DNA during high-speed replication. The polypeptide is DNA polymerase sliding clamp (Thermococcus onnurineus (strain NA1)).